We begin with the raw amino-acid sequence, 280 residues long: Phosphatidylglycerol--prolipoprotein diacylglyceryl transferase (280 aa).

3 consecutive transmembrane segments (helical) span residues 19 to 39, 56 to 76, and 90 to 110; these read LSVR…YFVA, IIFY…VIFQ, and IWHG…AGVI. Arg138 contributes to the a 1,2-diacyl-sn-glycero-3-phospho-(1'-sn-glycerol) binding site. Helical transmembrane passes span 204–224 and 236–256; these read LGET…FIEG and IRVA…LIVY.

It belongs to the Lgt family.

The protein localises to the cell membrane. It carries out the reaction L-cysteinyl-[prolipoprotein] + a 1,2-diacyl-sn-glycero-3-phospho-(1'-sn-glycerol) = an S-1,2-diacyl-sn-glyceryl-L-cysteinyl-[prolipoprotein] + sn-glycerol 1-phosphate + H(+). It participates in protein modification; lipoprotein biosynthesis (diacylglyceryl transfer). Its function is as follows. Catalyzes the transfer of the diacylglyceryl group from phosphatidylglycerol to the sulfhydryl group of the N-terminal cysteine of a prolipoprotein, the first step in the formation of mature lipoproteins. This Staphylococcus aureus (strain MRSA252) protein is Phosphatidylglycerol--prolipoprotein diacylglyceryl transferase.